Reading from the N-terminus, the 185-residue chain is CASP-like protein 2C3 (185 aa).

Topologically, residues 1 to 13 (MAAAARVSEVKAE) are cytoplasmic. A helical transmembrane segment spans residues 14 to 34 (GLLRGACAALAAAAALLVGLS). Topologically, residues 35–53 (TQTETVLLVRKKATVKDVQ) are extracellular. A helical transmembrane segment spans residues 54-74 (ALWVLAMAAAAAAGYHLLQLL). The Cytoplasmic portion of the chain corresponds to 75–104 (KCLYLGRVGGARPCRRSSRALAWTCLLLDK). The helical transmembrane segment at 105 to 125 (ACAYTTFATTVAAAQACVVAL) threads the bilayer. Residues 126 to 146 (DGAHAVQWTKLCNIYTRFCEQ) lie on the Extracellular side of the membrane. A helical membrane pass occupies residues 147-167 (VAGSLVLGMLAAVGTAVLSAA). Residues 168–185 (SARNVFRHYSSLETYAAH) lie on the Cytoplasmic side of the membrane.

It belongs to the Casparian strip membrane proteins (CASP) family. In terms of assembly, homodimer and heterodimers.

Its subcellular location is the cell membrane. The polypeptide is CASP-like protein 2C3 (Zea mays (Maize)).